Reading from the N-terminus, the 601-residue chain is Putative purine permease C1399.01c (601 aa).

Transmembrane regions (helical) follow at residues 64–84 (VPVL…VGGV), 102–122 (TNYL…IQIA), 131–151 (YYIG…VSVA), 179–199 (YGAF…MSFI), 207–227 (LFPP…LISS), 264–284 (GWGS…IIII), 294–314 (TTSV…TGYW), 337–357 (IYGP…MEAI), 424–444 (FFCA…AVFV), 450–470 (VLGG…IAII), 481–501 (FILT…DWFT), and 522–542 (LVME…NLIL).

This sequence belongs to the nucleobase:cation symporter-2 (NCS2) (TC 2.A.40) family.

It is found in the vacuole membrane. The polypeptide is Putative purine permease C1399.01c (Schizosaccharomyces pombe (strain 972 / ATCC 24843) (Fission yeast)).